The sequence spans 592 residues: Nuclear rim protein 1 (592 aa).

Transmembrane regions (helical) follow at residues 151 to 171 (FLNV…LFVA) and 255 to 275 (ALFS…EVSF). The tract at residues 547–592 (FEITASRDLPAGRSSAVSSRHSSISPFKGNTSFAGRESLDSRPPFR) is disordered. Low complexity predominate over residues 560–571 (SSAVSSRHSSIS).

This sequence belongs to the NUR1 family.

The protein localises to the nucleus membrane. Member of a perinuclear network that controls recombination at multiple loci to maintain genome stability. Required for rDNA repeat stability. The polypeptide is Nuclear rim protein 1 (NUR1) (Lachancea thermotolerans (strain ATCC 56472 / CBS 6340 / NRRL Y-8284) (Yeast)).